Reading from the N-terminus, the 166-residue chain is Anaerobic nitrite reductase NSHB1 (166 aa).

The Globin domain occupies 13-163 (SFSEEQEALV…LVAAIKQEMK (151 aa)). The short motif at 46 to 50 (EVAPS) is the Homodimerization element. Residues S56, K70, H74, R104, T108, and H109 each contribute to the heme b site. Positions 116–128 (DAHFEVVKFALLD) match the Homodimerization motif.

This sequence belongs to the plant globin family. In terms of assembly, homodimer. It depends on heme b as a cofactor. As to expression, expressed in coleoptiles, embryos, leaves, seminal roots and roots.

It is found in the cytoplasm. The protein resides in the nucleus. It catalyses the reaction Fe(III)-heme b-[protein] + nitric oxide + H2O = Fe(II)-heme b-[protein] + nitrite + 2 H(+). Slowly reduced by ascorbic acid (AA); this reaction may become a source of nitric oxide (NO) during hypoxia. Functionally, phytoglobin that reduces nitrite to nitric oxide under anoxic conditions (e.g. during flooding or in waterlogged soil). May not function as an oxygen storage or transport protein. Has an unusually high affinity for O(2) through a hexacoordinate heme iron because of a very low dissociation constant. The polypeptide is Anaerobic nitrite reductase NSHB1 (Oryza sativa subsp. japonica (Rice)).